A 421-amino-acid polypeptide reads, in one-letter code: Serine--tRNA ligase (421 aa).

231–233 (TGE) is a binding site for L-serine. 262 to 264 (RRE) lines the ATP pocket. Glu-285 contacts L-serine. 349-352 (EVSS) serves as a coordination point for ATP. Ser-384 contacts L-serine.

Belongs to the class-II aminoacyl-tRNA synthetase family. Type-1 seryl-tRNA synthetase subfamily. Homodimer. The tRNA molecule binds across the dimer.

Its subcellular location is the cytoplasm. It catalyses the reaction tRNA(Ser) + L-serine + ATP = L-seryl-tRNA(Ser) + AMP + diphosphate + H(+). It carries out the reaction tRNA(Sec) + L-serine + ATP = L-seryl-tRNA(Sec) + AMP + diphosphate + H(+). Its pathway is aminoacyl-tRNA biosynthesis; selenocysteinyl-tRNA(Sec) biosynthesis; L-seryl-tRNA(Sec) from L-serine and tRNA(Sec): step 1/1. Functionally, catalyzes the attachment of serine to tRNA(Ser). Is also able to aminoacylate tRNA(Sec) with serine, to form the misacylated tRNA L-seryl-tRNA(Sec), which will be further converted into selenocysteinyl-tRNA(Sec). This Methylacidiphilum infernorum (isolate V4) (Methylokorus infernorum (strain V4)) protein is Serine--tRNA ligase.